We begin with the raw amino-acid sequence, 188 residues long: HTH-type transcriptional regulator QacR (188 aa).

In terms of domain architecture, HTH tetR-type spans 1-61; that stretch reads MNLKDKILGV…EILNIEESKW (61 aa). The H-T-H motif DNA-binding region spans 24-43; that stretch reads TTGEIVKLSESSKGNLYYHF.

In terms of assembly, homodimer. Binds cooperatively to DNA as a pair of dimers.

Its function is as follows. Transcriptional repressor of qacA. Binds to IR1, an unusually long 28 bp operator, which is located downstream from the qacA promoter and overlaps its transcription start site. QacR is induced from its IR1 site by binding to one of many structurally dissimilar cationic lipophilic compounds, which are also substrates of QacA. The chain is HTH-type transcriptional regulator QacR (qacR) from Staphylococcus aureus (strain Mu50 / ATCC 700699).